A 126-amino-acid polypeptide reads, in one-letter code: Holo-[acyl-carrier-protein] synthase (126 aa).

Residues Asp-8 and Glu-57 each coordinate Mg(2+).

The protein belongs to the P-Pant transferase superfamily. AcpS family. Mg(2+) is required as a cofactor.

It localises to the cytoplasm. It catalyses the reaction apo-[ACP] + CoA = holo-[ACP] + adenosine 3',5'-bisphosphate + H(+). Functionally, transfers the 4'-phosphopantetheine moiety from coenzyme A to a Ser of acyl-carrier-protein. This is Holo-[acyl-carrier-protein] synthase from Leptospira interrogans serogroup Icterohaemorrhagiae serovar copenhageni (strain Fiocruz L1-130).